The sequence spans 886 residues: Alanine--tRNA ligase (886 aa).

The Zn(2+) site is built by H564, H568, C666, and H670.

It belongs to the class-II aminoacyl-tRNA synthetase family. It depends on Zn(2+) as a cofactor.

It is found in the cytoplasm. The catalysed reaction is tRNA(Ala) + L-alanine + ATP = L-alanyl-tRNA(Ala) + AMP + diphosphate. Catalyzes the attachment of alanine to tRNA(Ala) in a two-step reaction: alanine is first activated by ATP to form Ala-AMP and then transferred to the acceptor end of tRNA(Ala). Also edits incorrectly charged Ser-tRNA(Ala) and Gly-tRNA(Ala) via its editing domain. This Prochlorococcus marinus (strain AS9601) protein is Alanine--tRNA ligase.